Reading from the N-terminus, the 304-residue chain is Cytochrome c biogenesis protein CcsA (304 aa).

8 helical membrane passes run 8–28, 37–57, 63–83, 96–116, 141–161, 212–232, 246–263, and 275–295; these read LVTSLGFAAFVLLLIALPIAF, PGVVRLLVAVANLLLTAQLVL, GHFPISNLYESLCFLAWACTL, IVAAAATPMGLGCIAFASFAL, VIMVSYAALLVGSLLSLAVLV, TITVGFLMLTVGIISGAVWAN, TWALICWLVYAAYLHTRL, and VAVVGLIVIAVCYIGVNLLGI.

It belongs to the CcmF/CycK/Ccl1/NrfE/CcsA family. May interact with ccs1.

The protein localises to the cellular thylakoid membrane. Its function is as follows. Required during biogenesis of c-type cytochromes (cytochrome c6 and cytochrome f) at the step of heme attachment. The sequence is that of Cytochrome c biogenesis protein CcsA from Synechococcus sp. (strain CC9902).